We begin with the raw amino-acid sequence, 361 residues long: Protein TIFY 8 (361 aa).

4 disordered regions span residues 53–78, 113–134, 190–232, and 268–361; these read NKAAKAAMTPSTASASSAGGLGGLSS, RFSGNKRSNSDSHFTTQEHPET, QTAA…RKDL, and SGGS…KEAT. Positions 56 to 78 are enriched in low complexity; it reads AKAAMTPSTASASSAGGLGGLSS. 2 stretches are compositionally biased toward polar residues: residues 113–127 and 208–232; these read RFSGNKRSNSDSHFT and SSFTMPNSSKLESFAPSNTGNRKDL. Residues 232–267 form the Tify domain; it reads LASSTKQMTIFYGGQAHVFDDVHPNKADVIMALAGS. The segment covering 333–361 has biased composition (basic and acidic residues); the sequence is GREHQGSIISRGRDIRDPVHRSDPEKEAT.

Belongs to the TIFY/JAZ family. In terms of assembly, interacts with AFPH2/NINJA. Ubiquitinated. Targeted for degradation by the SCF(COI1) E3 ubiquitin ligase-proteasome pathway during jasmonate signaling.

It localises to the nucleus. Repressor of jasmonate responses. This is Protein TIFY 8 from Arabidopsis thaliana (Mouse-ear cress).